The chain runs to 428 residues: MRVVILGSGVVGVASAYYLARAGHEVTVIDREAGPALETSFANAGQISPGYAAPWAAPGVPLKAVKWMFEKHAPLAIRLDGTRFQLQWMVQMLRNCTAERYAVNKGRMVRLAEYSRDCLQALRADTGIQYEGRTGGTLQLFRTQQQLDGAAKDIAVLQEANVPFELLSPAELKHAEPALAAVSHKLTGGLRLPGDETGDCQLFTTRLAALAESLGVKFRYNTPIDALAIAGGKIAGVQCGSETVRADAYVVALGSYSTNFISNLMKIPVYPLKGYSITAPIVDAAAAPVSTVLDETYKIAITRFDQRIRVGGMAEIVGFDKTLRAARRETLEMCVNDLFPGGGDTSKATFWTGLRPMTPDGTPIVGRTPVSNLFLNTGHGTLGWTMSCGSGQLLADLISGKKPAIQADDLSVHRYLKDAPGQTRPAYA.

3-17 (VVILGSGVVGVASAY) is a binding site for FAD.

This sequence belongs to the DadA oxidoreductase family. FAD is required as a cofactor.

It catalyses the reaction a D-alpha-amino acid + A + H2O = a 2-oxocarboxylate + AH2 + NH4(+). Its pathway is amino-acid degradation; D-alanine degradation; NH(3) and pyruvate from D-alanine: step 1/1. Functionally, oxidative deamination of D-amino acids. This chain is D-amino acid dehydrogenase, found in Burkholderia cenocepacia (strain HI2424).